We begin with the raw amino-acid sequence, 322 residues long: DNA repair and recombination protein RadA (322 aa).

105–112 (GMFGSGKT) lines the ATP pocket.

This sequence belongs to the eukaryotic RecA-like protein family.

Involved in DNA repair and in homologous recombination. Binds and assemble on single-stranded DNA to form a nucleoprotein filament. Hydrolyzes ATP in a ssDNA-dependent manner and promotes DNA strand exchange between homologous DNA molecules. In Methanococcus maripaludis (strain DSM 14266 / JCM 13030 / NBRC 101832 / S2 / LL), this protein is DNA repair and recombination protein RadA.